A 371-amino-acid chain; its full sequence is MAQHDFAPAWLNFPTPPPSTKPFLYAEKRSESLGRSDCAFNVNRQRHNSSEAFDSSFGGNLKKREKNVWRPQSRSAAEPTWQREASLHLYSSNLQRVNSQLRSERNTSEFDLTRSLDREDCKTFEAEDFSFLYPEHERGKKLFTARLWEYPMNAGSTSPQMLGIKKGLMDDFSLSGYSIGVGNQSLPDKHWAGIKKEECKSLSKDNNIGSFYQDCPPENYIPNTSLHAELLSVDPCSLEEEEDTHLNNRNDSCPEMDINLNFDENENSEDNVNTLISGQISPAYAQDGVLSSSLEAEFKLLREMGWQENDESCAPLTEDEMREFQAISEQLQKNGLRKHVFLRDALAFDLFQDAVQKEDSETSSSDTSDDE.

It belongs to the vasculin family.

Its subcellular location is the nucleus. In terms of biological role, functions as a GC-rich promoter-specific transactivating transcription factor. The polypeptide is Vasculin (gpbp1) (Xenopus laevis (African clawed frog)).